We begin with the raw amino-acid sequence, 731 residues long: Actin filament-associated protein 1 (731 aa).

Position 1 is an N-acetylmethionine (Met1). A disordered region spans residues 46–90 (VKDHAQKAETNNLPAPPQMPLPEIPQPWLPPDSGPPPLPTSSLPE). The segment covering 59-84 (PAPPQMPLPEIPQPWLPPDSGPPPLP) has biased composition (pro residues). An SH3-binding motif is present at residues 70–73 (PQPW). Positions 93–96 (YEEA) match the SH2-binding 1 motif. The segment at 118–138 (GSSYESYDEEEEDGKGKKTQH) is disordered. Residues 152–248 (DAKICAFLLR…WLKVIKEAYS (97 aa)) enclose the PH 1 domain. The disordered stretch occupies residues 252-318 (GPVDPECSPP…SKSEAKGTVS (67 aa)). The segment covering 271–284 (AELEKKLSSERPSS) has biased composition (basic and acidic residues). 2 positions are modified to phosphoserine: Ser283 and Ser284. The 95-residue stretch at 348–442 (DVPTCGYLNV…WIGILLAETG (95 aa)) folds into the PH 2 domain. Residues 452–457 (YDYIDV) carry the SH2-binding 2 motif. The segment at 511–550 (SLKNKKPPASSNGLPVKGRAPSSQQKKVESAGGVKRTASN) is disordered. Ser549 carries the phosphoserine modification. Positions 558-649 (KNRVEADAKR…VKESLKKALA (92 aa)) form a coiled coil. The interval 595–638 (DLRAAIEVNAGRKTQVALEDKLKRLEEECKQREAERVSLELELT) is interaction with F-actin. The segment at 657–731 (AIEPKSGTSS…AREWELKNGT (75 aa)) is disordered. A phosphoserine mark is found at Ser665, Ser666, and Ser669. Residue Thr676 is modified to Phosphothreonine. Residues 678-687 (ENSPISSCDT) are compositionally biased toward polar residues. Phosphoserine occurs at positions 680 and 688. Residues 721–731 (KAREWELKNGT) show a composition bias toward basic and acidic residues.

As to quaternary structure, monomer and homomultimer. Interacts via its C-terminus with F-actin; probably involving AFAP1 multimers. Interacts with activated SRC SH3-SH2 domains. Interacts via its PH 1 domain with PRKCA, PRKCB and PRKCI. Post-translationally, phosphorylated on tyrosine residues. Widely expressed with highest levels in brain.

The protein resides in the cytoplasm. It is found in the cytoskeleton. The protein localises to the stress fiber. Its function is as follows. Can cross-link actin filaments into both network and bundle structures. May modulate changes in actin filament integrity and induce lamellipodia formation. May function as an adapter molecule that links other proteins, such as SRC and PKC to the actin cytoskeleton. The protein is Actin filament-associated protein 1 (Afap1) of Rattus norvegicus (Rat).